We begin with the raw amino-acid sequence, 693 residues long: Elongation factor G (693 aa).

Positions His8 to Asp284 constitute a tr-type G domain. GTP-binding positions include Ala17–Thr24, Asp81–His85, and Asn135–Asp138.

Belongs to the TRAFAC class translation factor GTPase superfamily. Classic translation factor GTPase family. EF-G/EF-2 subfamily.

The protein resides in the cytoplasm. Its function is as follows. Catalyzes the GTP-dependent ribosomal translocation step during translation elongation. During this step, the ribosome changes from the pre-translocational (PRE) to the post-translocational (POST) state as the newly formed A-site-bound peptidyl-tRNA and P-site-bound deacylated tRNA move to the P and E sites, respectively. Catalyzes the coordinated movement of the two tRNA molecules, the mRNA and conformational changes in the ribosome. This Nautilia profundicola (strain ATCC BAA-1463 / DSM 18972 / AmH) protein is Elongation factor G.